A 408-amino-acid chain; its full sequence is Putative UPF0496 protein 2 (408 aa).

Transmembrane regions (helical) follow at residues 224–244 and 252–272; these read RIAR…AIVA and ALVG…GAAR. The tract at residues 385–408 is disordered; it reads MARGLPPPSPATVTTTSEERLTSS.

Belongs to the UPF0496 family.

It is found in the membrane. The protein is Putative UPF0496 protein 2 of Oryza sativa subsp. japonica (Rice).